We begin with the raw amino-acid sequence, 435 residues long: E3 ubiquitin-protein ligase PUB22 (435 aa).

The region spanning 6 to 81 (EIPSFFLCPI…QSWCTLNASY (76 aa)) is the U-box domain.

Interacts with RPN12A. Binds to EXO70B2. In terms of processing, auto-ubiquitinated leading to degradation via the 26S proteasome. This Auto-ubiquitination is repressed by the bacterial elicitor flg22 thus leading to a transiently increased protein stabilization and accumulation.

Its subcellular location is the cytoplasm. The catalysed reaction is S-ubiquitinyl-[E2 ubiquitin-conjugating enzyme]-L-cysteine + [acceptor protein]-L-lysine = [E2 ubiquitin-conjugating enzyme]-L-cysteine + N(6)-ubiquitinyl-[acceptor protein]-L-lysine.. It functions in the pathway protein modification; protein ubiquitination. Its function is as follows. E3 ubiquitin-protein ligase that negatively regulates water stress response. May control in coordination with PUB23 a drought signaling pathway by ubiquitinating cytosolic RPN12a. Acts as a negative regulator of the immunity triggered by the pathogen-associated molecular patterns (PAMPs), in association with PUB23 and PUB24. Regulates EXO70B2 ubiquitination and degradation via the 26S proteasome to attenuate PAMP-induced signaling. This chain is E3 ubiquitin-protein ligase PUB22, found in Arabidopsis thaliana (Mouse-ear cress).